Here is a 958-residue protein sequence, read N- to C-terminus: MutS protein homolog 4 (958 aa).

Disordered regions lie at residues 51–110 and 124–161; these read QEAA…SFGN and PVGT…WTPQ. Residues 91-107 are compositionally biased toward low complexity; the sequence is SSSSSSSPAPASAPGSS. Composition is skewed to polar residues over residues 124–138 and 146–161; these read PVGT…TTYP and SAGN…WTPQ. Residue 702 to 709 coordinates ATP; that stretch reads GPNMSGKS.

It belongs to the DNA mismatch repair MutS family. In terms of assembly, heterooligomer of MSH4 and MSH5. As to expression, predominantly expressed in testis.

Its subcellular location is the chromosome. Functionally, involved in meiotic recombination. Required for reciprocal recombination and proper segregation of homologous chromosomes at meiosis. This chain is MutS protein homolog 4 (Msh4), found in Mus musculus (Mouse).